A 196-amino-acid polypeptide reads, in one-letter code: Protein GrpE (196 aa).

Residues 1–39 (MSSKEQKTPEGQAPEEIIMDQHEEIEAVEPEASAEQVDP) are disordered.

It belongs to the GrpE family. As to quaternary structure, homodimer.

The protein localises to the cytoplasm. In terms of biological role, participates actively in the response to hyperosmotic and heat shock by preventing the aggregation of stress-denatured proteins, in association with DnaK and GrpE. It is the nucleotide exchange factor for DnaK and may function as a thermosensor. Unfolded proteins bind initially to DnaJ; upon interaction with the DnaJ-bound protein, DnaK hydrolyzes its bound ATP, resulting in the formation of a stable complex. GrpE releases ADP from DnaK; ATP binding to DnaK triggers the release of the substrate protein, thus completing the reaction cycle. Several rounds of ATP-dependent interactions between DnaJ, DnaK and GrpE are required for fully efficient folding. The sequence is that of Protein GrpE from Escherichia coli O139:H28 (strain E24377A / ETEC).